A 391-amino-acid chain; its full sequence is uncharacterized protein (391 aa).

This is an uncharacterized protein from Rickettsia prowazekii (strain Madrid E).